A 359-amino-acid chain; its full sequence is Fructose-bisphosphate aldolase, cytoplasmic isozyme (359 aa).

Positions 52 and 142 each coordinate substrate. Catalysis depends on glutamate 184, which acts as the Proton acceptor. The active-site Schiff-base intermediate with dihydroxyacetone-P is the lysine 226.

It belongs to the class I fructose-bisphosphate aldolase family.

It is found in the cytoplasm. The catalysed reaction is beta-D-fructose 1,6-bisphosphate = D-glyceraldehyde 3-phosphate + dihydroxyacetone phosphate. It functions in the pathway carbohydrate degradation; glycolysis; D-glyceraldehyde 3-phosphate and glycerone phosphate from D-glucose: step 4/4. This is Fructose-bisphosphate aldolase, cytoplasmic isozyme (ALDC) from Cicer arietinum (Chickpea).